We begin with the raw amino-acid sequence, 402 residues long: Propionate kinase (402 aa).

Positions 11 and 18 each coordinate ATP. Mg(2+) is bound at residue asparagine 11. Position 86 (arginine 86) interacts with substrate. Catalysis depends on aspartate 143, which acts as the Proton donor/acceptor. ATP contacts are provided by residues histidine 175, 203-207 (HLGNG), 278-280 (DLR), and 326-330 (GIGEN).

Belongs to the acetokinase family. TdcD subfamily. As to quaternary structure, homodimer. It depends on Mg(2+) as a cofactor.

It carries out the reaction propanoate + ATP = propanoyl phosphate + ADP. It functions in the pathway amino-acid degradation; L-threonine degradation via propanoate pathway; propanoate from L-threonine: step 4/4. Functionally, catalyzes the conversion of propionyl phosphate and ADP to propionate and ATP. The protein is Propionate kinase of Citrobacter koseri (strain ATCC BAA-895 / CDC 4225-83 / SGSC4696).